Consider the following 469-residue polypeptide: 3-isopropylmalate dehydratase large subunit (469 aa).

[4Fe-4S] cluster is bound by residues C347, C410, and C413.

Belongs to the aconitase/IPM isomerase family. LeuC type 1 subfamily. As to quaternary structure, heterodimer of LeuC and LeuD. [4Fe-4S] cluster serves as cofactor.

The catalysed reaction is (2R,3S)-3-isopropylmalate = (2S)-2-isopropylmalate. The protein operates within amino-acid biosynthesis; L-leucine biosynthesis; L-leucine from 3-methyl-2-oxobutanoate: step 2/4. Its function is as follows. Catalyzes the isomerization between 2-isopropylmalate and 3-isopropylmalate, via the formation of 2-isopropylmaleate. This is 3-isopropylmalate dehydratase large subunit from Cupriavidus pinatubonensis (strain JMP 134 / LMG 1197) (Cupriavidus necator (strain JMP 134)).